Consider the following 304-residue polypeptide: Ring-infected erythrocyte surface antigen (304 aa).

N-linked (GlcNAc...) asparagine glycans are attached at residues N18 and N22. Over residues 142-159 (EHDAEENVEHDAEENVEH) the composition is skewed to basic and acidic residues. The tract at residues 142 to 304 (EHDAEENVEH…EENVEEHNGI (163 aa)) is disordered. The segment covering 160-298 (DAEENAEENV…NVEEYDEENV (139 aa)) has biased composition (acidic residues).

Its subcellular location is the cell membrane. Functionally, may disrupt the normal intermolecular interactions of the cytoplasmic domain of band 3 and thereby facilitate the invagination of the red cell membrane which is necessary for the formation of the parasitophorous vacuole. The sequence is that of Ring-infected erythrocyte surface antigen (RESA) from Plasmodium falciparum (isolate Palo Alto / Uganda).